Consider the following 110-residue polypeptide: Hydrogenase maturation factor HypA (110 aa).

His2 serves as a coordination point for Ni(2+). Residues Cys70, Cys73, Cys86, and Cys89 each contribute to the Zn(2+) site.

The protein belongs to the HypA/HybF family.

In terms of biological role, involved in the maturation of [NiFe] hydrogenases. Required for nickel insertion into the metal center of the hydrogenase. The protein is Hydrogenase maturation factor HypA of Geotalea daltonii (strain DSM 22248 / JCM 15807 / FRC-32) (Geobacter daltonii).